We begin with the raw amino-acid sequence, 161 residues long: MSTPNPPATNSTTSEDRLLCLTILGYRKQGMSEEAYRKHMIEHSAPLTKDLMIKYGILRWTVKCPDRSKIHNPTETRELMYEIMDPQMANIADYDCFSQVVFRNFEDYKKIKDDPWYKEHLVGDHENFADTKRSKMTIGWITQFIDRGVVTEGFEGFPGPK.

The EthD domain maps to 29–131; that stretch reads QGMSEEAYRK…VGDHENFADT (103 aa).

This sequence belongs to the tpcK family.

The catalysed reaction is atrochrysone carboxylate + H(+) = atrochrysone + CO2. It functions in the pathway secondary metabolite biosynthesis. Functionally, decarboxylase; part of the gene cluster that mediates the biosynthesis of monodictyphenone, a prenyl xanthone derivative. The pathway begins with the synthesis of atrochrysone thioester by the polyketide synthase (PKS) mdpG. The atrochrysone carboxyl ACP thioesterase mdpF then breaks the thioester bond and releases the atrochrysone carboxylic acid from mdpG. The atrochrysone carboxylic acid is then converted to atrochrysone which is further transformed into emodin anthrone by mdpH-1 and mdpH-2. Emodin is further modified to yield monodictyphenone via several steps involving mdpB, mdpC mdpJ, mdpK and mdpL. These enzymes with xptA, xptB and xptC are also proposed to be involved in the synthesis of shamixanthone from emodin. Especially, direct reduction of emodin by the short chain dehydrogenase mdpC followed by dehydration catalyzed by the scytalone dehydratase-like protein mdpB gives loss of oxygen and formation of chrysophanol intermediate in two simple steps. The chain is Decarboxylase from Emericella nidulans (strain FGSC A4 / ATCC 38163 / CBS 112.46 / NRRL 194 / M139) (Aspergillus nidulans).